Here is a 195-residue protein sequence, read N- to C-terminus: Imidazoleglycerol-phosphate dehydratase (195 aa).

The protein belongs to the imidazoleglycerol-phosphate dehydratase family.

Its subcellular location is the cytoplasm. It carries out the reaction D-erythro-1-(imidazol-4-yl)glycerol 3-phosphate = 3-(imidazol-4-yl)-2-oxopropyl phosphate + H2O. The protein operates within amino-acid biosynthesis; L-histidine biosynthesis; L-histidine from 5-phospho-alpha-D-ribose 1-diphosphate: step 6/9. In Exiguobacterium sp. (strain ATCC BAA-1283 / AT1b), this protein is Imidazoleglycerol-phosphate dehydratase.